The chain runs to 470 residues: Protein naked cuticle homolog 1 (470 aa).

Disordered stretches follow at residues 1–21 and 90–114; these read MGKL…PEGD and PPEK…PCPG. Gly-2 is lipidated: N-myristoyl glycine. Over residues 92–109 the composition is skewed to basic and acidic residues; sequence EKTDGLGSGDEKKMERVS. Residues 125 to 190 form an interaction with DVL1, DVL2 and DVL3 region; the sequence is QCDVSMEEDS…LRVKLTVAPD (66 aa). Positions 131 to 166 constitute an EF-hand domain; the sequence is EEDSRQEWTFTLYDFDNNGKVTREDITSLLHTIYEV. Positions 144, 146, 148, 150, and 155 each coordinate Ca(2+). A compositionally biased stretch (polar residues) spans 192 to 205; the sequence is SQSKRSVLVNQADL. Disordered regions lie at residues 192–228, 271–314, 337–357, and 446–470; these read SQSK…KKQR, QFGP…QGVD, GTQD…KSVG, and GQPV…FYQT. The span at 210 to 227 shows a compositional bias: basic and acidic residues; that stretch reads PRAETKPTEDLRSWEKKQ. Residues 271–281 show a composition bias toward polar residues; it reads QFGPGSPSVAQ. Positions 452-470 are enriched in basic residues; that stretch reads HEHHHHHEHHHHYHHFYQT.

The protein belongs to the NKD family. In terms of assembly, interacts with DVL1, DVL2, DVL3 and PPP2R3A. Expressed in colon, heart, kidney, leukocyte, liver, lung, ovary, pancreas, placenta, prostate, skeletal muscle, small intestine and spleen.

It localises to the cell membrane. Its subcellular location is the cytoplasm. In terms of biological role, cell autonomous antagonist of the canonical Wnt signaling pathway. May activate a second Wnt signaling pathway that controls planar cell polarity. The polypeptide is Protein naked cuticle homolog 1 (NKD1) (Homo sapiens (Human)).